The sequence spans 126 residues: Defensin-like protein 183 (126 aa).

A signal peptide spans 1–26 (MEKALSLVVFIIFSIMLASVENKVNA). 8 disulfide bridges follow: cysteine 29–cysteine 68, cysteine 36–cysteine 55, cysteine 39–cysteine 62, cysteine 43–cysteine 64, cysteine 80–cysteine 126, cysteine 91–cysteine 111, cysteine 96–cysteine 120, and cysteine 100–cysteine 122.

The protein belongs to the DEFL family.

It is found in the secreted. This chain is Defensin-like protein 183 (LCR19), found in Arabidopsis thaliana (Mouse-ear cress).